Here is a 60-residue protein sequence, read N- to C-terminus: Large ribosomal subunit protein bL33 (60 aa).

It belongs to the bacterial ribosomal protein bL33 family.

This Chlorobium phaeovibrioides (strain DSM 265 / 1930) (Prosthecochloris vibrioformis (strain DSM 265)) protein is Large ribosomal subunit protein bL33.